The chain runs to 123 residues: Small ribosomal subunit protein uS12 (123 aa).

3-methylthioaspartic acid is present on aspartate 89.

It belongs to the universal ribosomal protein uS12 family. As to quaternary structure, part of the 30S ribosomal subunit. Contacts proteins S8 and S17. May interact with IF1 in the 30S initiation complex.

In terms of biological role, with S4 and S5 plays an important role in translational accuracy. Functionally, interacts with and stabilizes bases of the 16S rRNA that are involved in tRNA selection in the A site and with the mRNA backbone. Located at the interface of the 30S and 50S subunits, it traverses the body of the 30S subunit contacting proteins on the other side and probably holding the rRNA structure together. The combined cluster of proteins S8, S12 and S17 appears to hold together the shoulder and platform of the 30S subunit. The protein is Small ribosomal subunit protein uS12 of Gluconobacter oxydans (strain 621H) (Gluconobacter suboxydans).